The sequence spans 133 residues: Beta-synuclein (133 aa).

Repeat copies occupy residues 20-30 (EKTKQGVTEAA) and 31-41 (EKTKEGVLYVG). Residues 20–66 (EKTKQGVTEAAEKTKEGVLYVGSKTSGVVQGVASVAEKTKEQASHLG) are 4 X 11 AA tandem repeats of [EGS]-K-T-K-[EQ]-[GQ]-V-X(4). One copy of the 3; approximate repeat lies at 42–55 (SKTSGVVQGVASVA). S45 carries the phosphoserine modification. Repeat unit 4 spans residues 56-66 (EKTKEQASHLG). Positions 96–133 (EVAQEAAEEPLIEPLMEPEGESYEDSPQEEYQEYEPEA) are disordered. Residues 97–133 (VAQEAAEEPLIEPLMEPEGESYEDSPQEEYQEYEPEA) show a composition bias toward acidic residues. S117 carries the phosphoserine; by BARK1, CK2 and GRK5 modification.

This sequence belongs to the synuclein family. Phosphorylated. Phosphorylation by G-protein coupled receptor kinases (GRK) is more efficient than phosphorylation by CK1, CK2 and CaM-kinase II. In terms of tissue distribution, highly expressed in the brain.

The protein localises to the cytoplasm. May be involved in neuronal plasticity. The chain is Beta-synuclein (Sncb) from Mus musculus (Mouse).